A 139-amino-acid chain; its full sequence is Dehydrin DHN1 (139 aa).

Residues 1 to 139 form a disordered region; that stretch reads MEYQGQHGHA…IKEKLPGGQH (139 aa). A compositionally biased stretch (gly residues) spans 23–42; sequence GHGGFTGGPTGTHGAAGVGG. A compositionally biased stretch (basic and acidic residues) spans 49 to 58; sequence RDGHKTDGVL. Residues 59 to 68 are compositionally biased toward low complexity; it reads RRSGSSSSSS. Positions 83–98 are enriched in basic and acidic residues; that stretch reads KEKIKEKLPGGAHKDA. Residues 99–109 are compositionally biased toward low complexity; that stretch reads AGQQQQTAMAG. The segment covering 120–139 has biased composition (basic and acidic residues); the sequence is TGEKKGVMDKIKEKLPGGQH.

Belongs to the plant dehydrin family.

The sequence is that of Dehydrin DHN1 (DHN1) from Hordeum vulgare (Barley).